We begin with the raw amino-acid sequence, 539 residues long: Chaperonin GroEL 2 (539 aa).

Residues 29-32, 86-90, G413, 477-479, and D493 contribute to the ATP site; these read TLGP, DGTTT, and NAA. A disordered region spans residues 519–539; it reads VVDKPEEEDSAAAGHGHGHSH.

Belongs to the chaperonin (HSP60) family. In terms of assembly, forms a cylinder of 14 subunits composed of two heptameric rings stacked back-to-back. Interacts with the co-chaperonin GroES.

The protein resides in the cytoplasm. The catalysed reaction is ATP + H2O + a folded polypeptide = ADP + phosphate + an unfolded polypeptide.. In terms of biological role, together with its co-chaperonin GroES, plays an essential role in assisting protein folding. The GroEL-GroES system forms a nano-cage that allows encapsulation of the non-native substrate proteins and provides a physical environment optimized to promote and accelerate protein folding. The sequence is that of Chaperonin GroEL 2 from Saccharopolyspora erythraea (strain ATCC 11635 / DSM 40517 / JCM 4748 / NBRC 13426 / NCIMB 8594 / NRRL 2338).